The following is a 371-amino-acid chain: 43 kDa relaxation protein (371 aa).

Disordered regions lie at residues 1 to 46 (MASY…GNMP), 150 to 172 (KEPD…AKNT), 196 to 221 (RVDS…GQVQ), 263 to 291 (SERD…FDFE), and 328 to 371 (IHQE…SFSR). Residues 22–42 (YIAREGKYAREKDSDLEHKES) are compositionally biased toward basic and acidic residues. Basic residues predominate over residues 157–168 (QKRHVSGKHRPN). Over residues 196 to 215 (RVDSRSLKAQGIDREPERHL) the composition is skewed to basic and acidic residues. Residues 330–365 (QEMERQRERERLAEKQRQQEKERQRLAEQIRQKPDK) show a composition bias toward basic and acidic residues.

Belongs to the MobA/MobL family.

Its function is as follows. This protein is probably required for relaxation complex formation. The protein is 43 kDa relaxation protein of Salmonella typhimurium.